The sequence spans 40 residues: Photosystem II reaction center protein J (40 aa).

A helical membrane pass occupies residues 10 to 30; it reads LWIIGTVTGILVIGLIGIFFF.

Belongs to the PsbJ family. In terms of assembly, PSII is composed of 1 copy each of membrane proteins PsbA, PsbB, PsbC, PsbD, PsbE, PsbF, PsbH, PsbI, PsbJ, PsbK, PsbL, PsbM, PsbT, PsbX, PsbY, PsbZ, Psb30/Ycf12, at least 3 peripheral proteins of the oxygen-evolving complex and a large number of cofactors. It forms dimeric complexes.

It localises to the plastid membrane. Its function is as follows. One of the components of the core complex of photosystem II (PSII). PSII is a light-driven water:plastoquinone oxidoreductase that uses light energy to abstract electrons from H(2)O, generating O(2) and a proton gradient subsequently used for ATP formation. It consists of a core antenna complex that captures photons, and an electron transfer chain that converts photonic excitation into a charge separation. This chain is Photosystem II reaction center protein J, found in Cuscuta exaltata (Tall dodder).